The primary structure comprises 465 residues: GTPase Der (465 aa).

2 consecutive EngA-type G domains span residues Phe-3–Tyr-166 and Ile-184–Ser-358. GTP is bound by residues Gly-9–Ser-16, Asp-56–Ile-60, Asn-118–Asp-121, Gly-190–Ser-197, Asp-237–Val-241, and Asn-302–Asp-305. Residues Lys-359 to Glu-443 form the KH-like domain. The segment at Phe-446–Lys-465 is disordered.

It belongs to the TRAFAC class TrmE-Era-EngA-EngB-Septin-like GTPase superfamily. EngA (Der) GTPase family. In terms of assembly, associates with the 50S ribosomal subunit.

Functionally, GTPase that plays an essential role in the late steps of ribosome biogenesis. The sequence is that of GTPase Der from Francisella tularensis subsp. tularensis (strain FSC 198).